The primary structure comprises 290 residues: Bifunctional protein FolD (290 aa).

Residues 167-169, Ser192, and Ile233 contribute to the NADP(+) site; that span reads GRS.

This sequence belongs to the tetrahydrofolate dehydrogenase/cyclohydrolase family. In terms of assembly, homodimer.

It catalyses the reaction (6R)-5,10-methylene-5,6,7,8-tetrahydrofolate + NADP(+) = (6R)-5,10-methenyltetrahydrofolate + NADPH. It carries out the reaction (6R)-5,10-methenyltetrahydrofolate + H2O = (6R)-10-formyltetrahydrofolate + H(+). Its pathway is one-carbon metabolism; tetrahydrofolate interconversion. Catalyzes the oxidation of 5,10-methylenetetrahydrofolate to 5,10-methenyltetrahydrofolate and then the hydrolysis of 5,10-methenyltetrahydrofolate to 10-formyltetrahydrofolate. This is Bifunctional protein FolD from Gloeobacter violaceus (strain ATCC 29082 / PCC 7421).